A 186-amino-acid polypeptide reads, in one-letter code: MKLLIDFFPIILFFAAFKVWGIYVATAVAIAATVVQIGYIRLKHGKVEPLQWLSLGVIVLFGGATLLAHSETFIKWKPTVLYWLMGGTLLVGQLMFRKNFIQSLMGAQIDLPAPVWRNLNWGWTGFFATMGVLNLWVAYHFDTDTWVNFKLFGGIGLMFAFVIAQALYLSRHVKDEGDAAPKDLQP.

The next 5 membrane-spanning stretches (helical) occupy residues 10–30 (IILFFAAFKVWGIYVATAVAI), 47–67 (VEPLQWLSLGVIVLFGGATLL), 76–96 (WKPTVLYWLMGGTLLVGQLMF), 121–141 (WGWTGFFATMGVLNLWVAYHF), and 149–169 (FKLFGGIGLMFAFVIAQALYL).

Belongs to the YciB family.

It localises to the cell inner membrane. Its function is as follows. Plays a role in cell envelope biogenesis, maintenance of cell envelope integrity and membrane homeostasis. This chain is Inner membrane-spanning protein YciB, found in Acidovorax ebreus (strain TPSY) (Diaphorobacter sp. (strain TPSY)).